Reading from the N-terminus, the 501-residue chain is NADH-quinone oxidoreductase subunit M (501 aa).

A run of 14 helical transmembrane segments spans residues 1–21, 30–50, 86–106, 115–134, 139–156, 174–194, 222–242, 252–272, 286–306, 314–331, 341–363, 374–394, 420–440, and 459–479; these read MLLSLLVIIPFLSGIFSFFSF, WIALTGMGLTLLTVIRIWFFE, FSIVMLFLTLFLGIIAILCSW, FFYLNIMLVLMGTIGVFIAF, FFFFWEIILIPMYFLISL, FFIYTQISGLIMLASILLLVL, IIMLGFFLAFIIKMPIVPFHG, PYCGAVDIIGALLKTAPYGLL, FAPIAIFLGFLSMFYGAWVAF, LIAYSSISHMGLMLIAIY, LIIQILSNSISTSALFILSGQIY, MGGLWTNIYWIPGFSLFFALS, LVSIISTIGIIFSSIYSLNMI, and IKEFWISIVLIFALIFLGLIP.

It belongs to the complex I subunit 4 family. As to quaternary structure, composed of 13 different subunits. Subunits NuoA, H, J, K, L, M, N constitute the membrane sector of the complex.

It is found in the cell membrane. The catalysed reaction is a quinone + NADH + 5 H(+)(in) = a quinol + NAD(+) + 4 H(+)(out). NDH-1 shuttles electrons from NADH, via FMN and iron-sulfur (Fe-S) centers, to quinones in the respiratory chain. Couples the redox reaction to proton translocation (for every two electrons transferred, four hydrogen ions are translocated across the cytoplasmic membrane), and thus conserves the redox energy in a proton gradient. In Buchnera aphidicola subsp. Schizaphis graminum (strain Sg), this protein is NADH-quinone oxidoreductase subunit M (nuoM).